Consider the following 264-residue polypeptide: Small ribosomal subunit protein eS1 (264 aa).

Position 34 is an N6-acetyllysine; alternate (Lys34). Residue Lys34 forms a Glycyl lysine isopeptide (Lys-Gly) (interchain with G-Cter in SUMO2); alternate linkage. Lys56 is modified (N6-acetyllysine). At Tyr155 the chain carries ADP-ribosyltyrosine. The tract at residues 232–264 (HGEGGSSGKTTGDETGAKVERADGYEPPVQESV) is disordered. Position 237 is a phosphoserine (Ser237). The segment covering 242–255 (TGDETGAKVERADG) has biased composition (basic and acidic residues). Residue Lys249 is modified to N6-acetyllysine; alternate. Lys249 participates in a covalent cross-link: Glycyl lysine isopeptide (Lys-Gly) (interchain with G-Cter in SUMO2); alternate. The residue at position 256 (Tyr256) is a Phosphotyrosine. Ser263 carries the phosphoserine modification.

Belongs to the eukaryotic ribosomal protein eS1 family. Component of the small ribosomal subunit. Mature ribosomes consist of a small (40S) and a large (60S) subunit. The 40S subunit contains about 33 different proteins and 1 molecule of RNA (18S). The 60S subunit contains about 49 different proteins and 3 molecules of RNA (28S, 5.8S and 5S). Identified in a IGF2BP1-dependent mRNP granule complex containing untranslated mRNAs. Binds with high affinity to IPO4. Interacts with DDIT3. Part of the small subunit (SSU) processome, composed of more than 70 proteins and the RNA chaperone small nucleolar RNA (snoRNA) U3. The protein designated S3b has the same amino acid sequence as S3a except that it lacks the C-terminal 12 residues. It is probable that S3a is converted by proteolysis, either physiologically or fortuitously, to S3b. In terms of processing, ADP-ribosylated at Tyr-155 by PARP1 in presence of HPF1.

Its subcellular location is the cytoplasm. It localises to the nucleus. It is found in the nucleolus. Its function is as follows. Component of the small ribosomal subunit. The ribosome is a large ribonucleoprotein complex responsible for the synthesis of proteins in the cell. Part of the small subunit (SSU) processome, first precursor of the small eukaryotic ribosomal subunit. During the assembly of the SSU processome in the nucleolus, many ribosome biogenesis factors, an RNA chaperone and ribosomal proteins associate with the nascent pre-rRNA and work in concert to generate RNA folding, modifications, rearrangements and cleavage as well as targeted degradation of pre-ribosomal RNA by the RNA exosome. May play a role during erythropoiesis through regulation of transcription factor DDIT3. The protein is Small ribosomal subunit protein eS1 (Rps3a) of Rattus norvegicus (Rat).